The primary structure comprises 378 residues: Vacuolar membrane protein CAGL0J10076g (378 aa).

Residues Arg-18–Thr-70 form a disordered region. 2 stretches are compositionally biased toward low complexity: residues Thr-25–Thr-41 and Ser-48–Thr-70. Residues Phe-118–Ile-138 traverse the membrane as a helical segment. Residues Asn-299–Met-368 form a disordered region. Over residues Arg-321–Arg-337 the composition is skewed to basic residues. The segment covering Ser-343–Arg-356 has biased composition (low complexity).

This sequence belongs to the PRM5 family.

It localises to the vacuole membrane. The sequence is that of Vacuolar membrane protein CAGL0J10076g from Candida glabrata (strain ATCC 2001 / BCRC 20586 / JCM 3761 / NBRC 0622 / NRRL Y-65 / CBS 138) (Yeast).